Consider the following 332-residue polypeptide: Ketol-acid reductoisomerase (NADP(+)) (332 aa).

The 181-residue stretch at 2–182 (AKIYHDLEVS…GATRAGVLET (181 aa)) folds into the KARI N-terminal Rossmann domain. NADP(+) is bound by residues 25–28 (YGSQ), arginine 48, serine 53, and 83–86 (DTEQ). The active site involves histidine 108. Glycine 134 contacts NADP(+). The region spanning 183–328 (TFKEETETDL…KVIREMMPWL (146 aa)) is the KARI C-terminal knotted domain. Aspartate 191, glutamate 195, glutamate 227, and glutamate 231 together coordinate Mg(2+). Residue serine 252 coordinates substrate.

The protein belongs to the ketol-acid reductoisomerase family. Requires Mg(2+) as cofactor.

It carries out the reaction (2R)-2,3-dihydroxy-3-methylbutanoate + NADP(+) = (2S)-2-acetolactate + NADPH + H(+). The enzyme catalyses (2R,3R)-2,3-dihydroxy-3-methylpentanoate + NADP(+) = (S)-2-ethyl-2-hydroxy-3-oxobutanoate + NADPH + H(+). It participates in amino-acid biosynthesis; L-isoleucine biosynthesis; L-isoleucine from 2-oxobutanoate: step 2/4. It functions in the pathway amino-acid biosynthesis; L-valine biosynthesis; L-valine from pyruvate: step 2/4. Involved in the biosynthesis of branched-chain amino acids (BCAA). Catalyzes an alkyl-migration followed by a ketol-acid reduction of (S)-2-acetolactate (S2AL) to yield (R)-2,3-dihydroxy-isovalerate. In the isomerase reaction, S2AL is rearranged via a Mg-dependent methyl migration to produce 3-hydroxy-3-methyl-2-ketobutyrate (HMKB). In the reductase reaction, this 2-ketoacid undergoes a metal-dependent reduction by NADPH to yield (R)-2,3-dihydroxy-isovalerate. In Dictyoglomus thermophilum (strain ATCC 35947 / DSM 3960 / H-6-12), this protein is Ketol-acid reductoisomerase (NADP(+)).